A 295-amino-acid chain; its full sequence is MEKVVGTDRVKQGMAQMQKGGVIMDVINAEQAKIAEEAGAVAVMALERVPSDIRAAGGVARMADPTVTEEVLNAVSIPVMAKARIGHIVEAKVLEAMGVDYIDESEVLTPADEVYHLNKRDFTVPFVCGARDLGEAARRIGEGASMIRTKGEPGTGNIVEAVRHMRKMQAQIKQVAHMSTDELMTEAKQLGAPYELLLHIKETGQLPVVNFAAGGIATPADAALMMHLGADGVFVGSGIFKSDNPEKFARAIVEATTHYTDYERIAELSKNLGSAMKGIDVATLAPAERMQDRGW.

D-ribose 5-phosphate is bound at residue D25. K82 acts as the Schiff-base intermediate with D-ribose 5-phosphate in catalysis. G154 lines the D-ribose 5-phosphate pocket. R166 contributes to the D-glyceraldehyde 3-phosphate binding site. D-ribose 5-phosphate is bound by residues G215 and 236-237 (GS).

Belongs to the PdxS/SNZ family. In terms of assembly, in the presence of PdxT, forms a dodecamer of heterodimers.

It carries out the reaction aldehydo-D-ribose 5-phosphate + D-glyceraldehyde 3-phosphate + L-glutamine = pyridoxal 5'-phosphate + L-glutamate + phosphate + 3 H2O + H(+). Its pathway is cofactor biosynthesis; pyridoxal 5'-phosphate biosynthesis. Functionally, catalyzes the formation of pyridoxal 5'-phosphate from ribose 5-phosphate (RBP), glyceraldehyde 3-phosphate (G3P) and ammonia. The ammonia is provided by the PdxT subunit. Can also use ribulose 5-phosphate and dihydroxyacetone phosphate as substrates, resulting from enzyme-catalyzed isomerization of RBP and G3P, respectively. The protein is Pyridoxal 5'-phosphate synthase subunit PdxS of Shouchella clausii (strain KSM-K16) (Alkalihalobacillus clausii).